Consider the following 439-residue polypeptide: Ribosomal protein uS12 methylthiotransferase RimO (439 aa).

Positions 2–114 (SKLYLMSLGC…IDEMILKKTN (113 aa)) constitute an MTTase N-terminal domain. Cys11, Cys45, Cys77, Cys146, Cys150, and Cys153 together coordinate [4Fe-4S] cluster. The region spanning 132–363 (TGSNSHAFIK…VDEVIEKSFE (232 aa)) is the Radical SAM core domain.

Belongs to the methylthiotransferase family. RimO subfamily. [4Fe-4S] cluster is required as a cofactor.

It localises to the cytoplasm. The catalysed reaction is L-aspartate(89)-[ribosomal protein uS12]-hydrogen + (sulfur carrier)-SH + AH2 + 2 S-adenosyl-L-methionine = 3-methylsulfanyl-L-aspartate(89)-[ribosomal protein uS12]-hydrogen + (sulfur carrier)-H + 5'-deoxyadenosine + L-methionine + A + S-adenosyl-L-homocysteine + 2 H(+). Its function is as follows. Catalyzes the methylthiolation of an aspartic acid residue of ribosomal protein uS12. This chain is Ribosomal protein uS12 methylthiotransferase RimO, found in Campylobacter jejuni subsp. jejuni serotype O:23/36 (strain 81-176).